The chain runs to 143 residues: Large-conductance mechanosensitive channel (143 aa).

Helical transmembrane passes span 19–39 and 81–101; these read VGVI…ADVI and GSFL…FLVV.

Belongs to the MscL family. As to quaternary structure, homopentamer.

The protein resides in the cell inner membrane. Functionally, channel that opens in response to stretch forces in the membrane lipid bilayer. May participate in the regulation of osmotic pressure changes within the cell. This Rhodopseudomonas palustris (strain HaA2) protein is Large-conductance mechanosensitive channel.